A 551-amino-acid chain; its full sequence is MPQLNGGGGDELGANDEMISFKDEGEQEDKISENVSAERGLDDVKSSLVSESENNSSSSDSEQTERRPQPRADLESYEKAREYFTEALRRQQDGGFFKSPHYPGYPFLMIPDLANPYLSNGALSPSARTYLQMKWPLLDVPGSAALKDSQSPSPGHLSNKVPVVQHAHMHPLTPLITYSNEFPPGTPPAHLSPEILDPKTGIPRTPHPAELSPYYPLSPGTVGQIPHPLGWLVPQQGQHMYPITAGGFRHPYPALAMNASMSSLVSSRFSPHLVPHHPHGLHQTGIPHPAIVSPVIKQEPNGELSPPVNTKSPGPNKKDEDKKPHIKKPLNAFMLYMKEMRAKVVAECTLKENAAINQILGRRWHSLSREEQAKYYELARKERQLHSQLYPGWSARDNYGKRKKRKRDNKTDSTPEDFSMRSKKPCVQYLPQEKMIDSPGSSHGSMLDSPATPSAALASPAAPAATHSEQAQPLSLTTKPERFPLLSKPPPSSSSSSSSSSSSGLPTPPLLSRPLPFALLTPPSPFHQAALHSHHALFQSQPLSLVTKSSD.

The segment covering 1 to 11 (MPQLNGGGGDE) has biased composition (gly residues). 3 disordered regions span residues 1 to 76 (MPQL…DLES), 298 to 326 (QEPN…KPHI), and 392 to 525 (GWSA…PPSP). The segment covering 19 to 32 (ISFKDEGEQEDKIS) has biased composition (basic and acidic residues). Residues 46–61 (SSLVSESENNSSSSDS) show a composition bias toward low complexity. Basic and acidic residues predominate over residues 63–76 (QTERRPQPRADLES). The segment at residues 326–394 (IKKPLNAFML…LHSQLYPGWS (69 aa)) is a DNA-binding region (HMG box). Over residues 449-468 (SPATPSAALASPAAPAATHS) the composition is skewed to low complexity. The segment covering 469 to 478 (EQAQPLSLTT) has biased composition (polar residues). Over residues 493–505 (SSSSSSSSSSSGL) the composition is skewed to low complexity.

It belongs to the TCF/LEF family. In terms of assembly, interacts with ctnnb1.

Its subcellular location is the nucleus. In terms of biological role, participates in the Wnt signaling pathway. Probably binds to DNA and acts as a repressor in the absence of ctnnb1, and possibly as an activator in its presence. Regulates anterior-posterior patterning in the neuroectoderm by repressing posterior neural fates. Also required for hindbrain morphogenesis. The protein is Transcription factor 7-like 1-B (tcf7l1b) of Danio rerio (Zebrafish).